A 329-amino-acid chain; its full sequence is DGAT1/2-independent enzyme synthesizing storage lipids (329 aa).

At 1–50 (MIDNNQTCAAGQDSVPYVTCMIYVLEEWLGVEQLEDYLNFANHLLWVFTP) the chain is on the lumenal side. A glycan (N-linked (GlcNAc...) asparagine) is linked at asparagine 5. Residues 51 to 71 (LILLILPYFTIFLLYLTIIFL) traverse the membrane as a helical segment. Topologically, residues 72 to 120 (HIYKRKNVLKEAYSHNLWDGARKTVATLWDGHAAVWHGYEVHGMEKIPE) are cytoplasmic. A helical transmembrane segment spans residues 121–141 (GAALIIFYHGAIPIDFYYFMA). Residue histidine 129 is part of the active site. Over 142 to 329 (KIFIQKGRTC…DRFHKEQKAH (188 aa)) the chain is Lumenal.

Belongs to the diacylglycerol acyltransferase family. Highly divergent. Widely expressed, with highest level in the brain, followed by lung and duodenum, and lowest levels in tongue, testis, skin and ileum.

The protein resides in the endoplasmic reticulum membrane. The enzyme catalyses a 1,2-diacylglycerol + a 1,2-diacyl-sn-glycero-3-phosphocholine = a triacylglycerol + a 1-acyl-sn-glycero-3-phosphocholine. It catalyses the reaction a 1-O-alkyl-2-acyl-sn-glycero-3-phosphocholine + a 1,2-diacylglycerol = a 1-O-alkyl-sn-glycero-3-phosphocholine + a triacylglycerol. It carries out the reaction a 2-acylglycerol + an acyl-CoA = a 1,2-diacylglycerol + CoA. The catalysed reaction is an acyl-CoA + a 1,2-diacyl-sn-glycerol = a triacyl-sn-glycerol + CoA. The enzyme catalyses 2-(9Z-octadecenoyl)-glycerol + (9Z)-octadecenoyl-CoA = 1,2-di-(9Z-octadecenoyl)-glycerol + CoA. It catalyses the reaction 1,2-di-(9Z-octadecenoyl)-sn-glycerol + (9Z)-octadecenoyl-CoA = 1,2,3-tri-(9Z-octadecenoyl)-glycerol + CoA. With respect to regulation, acyltransferase activity is specifically inhibited by TMX1 at the endoplasmic reticulum, restricting accumulation of triacylglycerol. Its function is as follows. Catalytic subunit of the alternative triglyceride biosynthesis pathway, which mediates formation of triacylglycerol from diacylglycerol and membrane phospholipids. Synthesizes triacylglycerol at the expense of membrane phospholipids, such as phosphatidylcholine (PC) and its ether-linked form (ePC), thereby altering the composition of membranes. The alternative triglyceride biosynthesis pathway is probably required to provide the energy required for rapid growth when fuel sources are limiting. It maintains mitochondrial function during periods of extracellular lipid starvation. Can also use acyl-CoA as donor: acts as a acyl-CoA:monoacylglycerol acyltransferase (MGAT), but also shows acyl-CoA:diacylglycerol acyltransferase (DGAT) activity. The protein is DGAT1/2-independent enzyme synthesizing storage lipids of Mus musculus (Mouse).